The following is a 548-amino-acid chain: Calcium-transporting ATPase (548 aa).

The first 21 residues, 1-21, serve as a signal peptide directing secretion; sequence MNFKSTVITAMCCFFSFAVLA. Residues aspartate 37 and threonine 78 each coordinate a divalent metal cation. Threonine 78 serves as the catalytic Phosphothreonine intermediate. Substrate-binding positions include asparagine 99 and 160–162; that span reads KDR. Residues 179-187 carry the ATP-binding motif; it reads DGKTGDWIT. Positions 305, 309, 352, 353, and 488 each coordinate a divalent metal cation.

It depends on Mg(2+) as a cofactor.

Its subcellular location is the cell inner membrane. It catalyses the reaction Ca(2+)(in) + ATP + H2O = Ca(2+)(out) + ADP + phosphate + H(+). With respect to regulation, completely inhibited by vanadate(3-). Also inhibited by lanthanoid atom and phosphate. Not inhibited by N-ethylmaleimide, 1,3-dicyclohexylcarbodiimide, oligomycin, ouabain, valinomycin, nigericin, thapsigargin, cyclopiazonic acid or fluorescein isothiocyanate. In terms of biological role, catalyzes the hydrolysis of ATP coupled with the transport of calcium. Has some hydrolysis activity also with dATP, GTP, UTP, ITP and 4-nitrophenyl phosphate as substrate. No activity with ADP, CTP, acetyl dihydrogen phosphate or AMP-PNP as substrate. This is Calcium-transporting ATPase from Myroides odoratus (Flavobacterium odoratum).